The sequence spans 916 residues: Nonsense-mediated mRNA decay factor SMG8 (916 aa).

Positions 566–626 (LENSNRTPDT…KNYASQGDAD (61 aa)) are disordered. Polar residues predominate over residues 589-604 (LSGSQKSQDSASNLTF).

This sequence belongs to the SMG8 family.

Involved in nonsense-mediated decay (NMD) of mRNAs containing premature stop codons. Probable component of kinase complex containing SMG1 and recruited to stalled ribosomes. This Aedes aegypti (Yellowfever mosquito) protein is Nonsense-mediated mRNA decay factor SMG8.